The chain runs to 335 residues: Ferrochelatase (335 aa).

Fe cation-binding residues include histidine 211 and glutamate 290.

Belongs to the ferrochelatase family.

The protein resides in the cytoplasm. The catalysed reaction is heme b + 2 H(+) = protoporphyrin IX + Fe(2+). It functions in the pathway porphyrin-containing compound metabolism; protoheme biosynthesis; protoheme from protoporphyrin-IX: step 1/1. Catalyzes the ferrous insertion into protoporphyrin IX. This is Ferrochelatase from Sulfurihydrogenibium sp. (strain YO3AOP1).